Consider the following 189-residue polypeptide: Pyridoxal 5'-phosphate synthase subunit PdxT (189 aa).

50–52 (GES) is a binding site for L-glutamine. C80 (nucleophile) is an active-site residue. L-glutamine is bound by residues R107 and 134-135 (IR). Catalysis depends on charge relay system residues H169 and E171.

This sequence belongs to the glutaminase PdxT/SNO family. As to quaternary structure, in the presence of PdxS, forms a dodecamer of heterodimers. Only shows activity in the heterodimer.

The enzyme catalyses aldehydo-D-ribose 5-phosphate + D-glyceraldehyde 3-phosphate + L-glutamine = pyridoxal 5'-phosphate + L-glutamate + phosphate + 3 H2O + H(+). It catalyses the reaction L-glutamine + H2O = L-glutamate + NH4(+). The protein operates within cofactor biosynthesis; pyridoxal 5'-phosphate biosynthesis. In terms of biological role, catalyzes the hydrolysis of glutamine to glutamate and ammonia as part of the biosynthesis of pyridoxal 5'-phosphate. The resulting ammonia molecule is channeled to the active site of PdxS. The chain is Pyridoxal 5'-phosphate synthase subunit PdxT from Picrophilus torridus (strain ATCC 700027 / DSM 9790 / JCM 10055 / NBRC 100828 / KAW 2/3).